Here is a 210-residue protein sequence, read N- to C-terminus: Cancer/testis antigen 2 (210 aa).

Gly residues-rich tracts occupy residues 1-47 (MQAE…GPRG) and 56-66 (PRGGAPRGPHG). Disordered stretches follow at residues 1-80 (MQAE…PCGA) and 154-197 (GLGS…DGCR). A compositionally biased stretch (basic and acidic residues) spans 163–177 (QKARDLRTPKHKVSE).

This sequence belongs to the CTAG/PCC1 family. In terms of tissue distribution, testis and very low level in placenta and in some uterus samples. Observed in 25-50% of tumor samples of melanomas, non-small-cell lung carcinomas, bladder, prostate and head and neck cancers.

This Homo sapiens (Human) protein is Cancer/testis antigen 2 (CTAG2).